A 458-amino-acid polypeptide reads, in one-letter code: Sugar transporter ERD6-like 10 (458 aa).

Helical transmembrane passes span 17–37 (ITAC…SYGC), 66–86 (FLNL…VILG), 96–116 (LFCI…WLDL), 119–139 (ISLG…IAEI), 150–170 (ASTL…GTVI), 174–194 (VLAV…YFIP), 257–277 (LVVG…GITY), 292–312 (LGSM…LILV), 319–339 (PLLL…GVSF), 350–370 (FIPV…AIGI), 393–413 (IVAL…NFMF), and 419–439 (GTFY…WMLV).

Belongs to the major facilitator superfamily. Sugar transporter (TC 2.A.1.1) family.

It localises to the membrane. Sugar transporter. The chain is Sugar transporter ERD6-like 10 from Arabidopsis thaliana (Mouse-ear cress).